The primary structure comprises 154 residues: UPF0178 protein Sala_2376 (154 aa).

It belongs to the UPF0178 family.

The protein is UPF0178 protein Sala_2376 of Sphingopyxis alaskensis (strain DSM 13593 / LMG 18877 / RB2256) (Sphingomonas alaskensis).